Consider the following 502-residue polypeptide: MVAIRPDEISTIIRQQIESYNQEVQVSNVGTVLQVGDGTARIYGLQQAMSGELLEFEDGTVGIALNLEEDNVGAVLMGDGFGIKEGGTVKATGKIAQVPVGDALVGRVVDALGRPIDGKGEILASETRLVESPAPGIVARKSVCEPMQTGITAIDAMIPVGRGQRELIIGDRKTGKTAIAIDTIINQKSEDVICVYVAIGQKASTVAQVIDTLTQRGAMDYTVVVAANANDPATLQYIAPYTGASIAEYFMYKGKATLVIYDDLTKQAQAYRQLSLLMRRPPGREAYPGDVFYLHSRLLERAAKLSDALGGGSMTALPIIETQAGDVSAYIPTNVISITDGQIFLSTDLFNAGFRPAINAGISVSRVGSAAQTKAMKKVAGKLKLELAQFDELEAFAQFASDLDAATQAQLARGQRLRQILKQPQNFPLSVWEQVAVVYAGLNGYLDDIATDKVIDFCAGLREYLKTSKPRYVEIVSTEKQLNDEAEGLLKDGINEYKQAFK.

ATP is bound at residue 170 to 177 (GDRKTGKT).

Belongs to the ATPase alpha/beta chains family. As to quaternary structure, F-type ATPases have 2 components, CF(1) - the catalytic core - and CF(0) - the membrane proton channel. CF(1) has five subunits: alpha(3), beta(3), gamma(1), delta(1), epsilon(1). CF(0) has four main subunits: a, b, b' and c.

It is found in the cellular thylakoid membrane. It carries out the reaction ATP + H2O + 4 H(+)(in) = ADP + phosphate + 5 H(+)(out). Produces ATP from ADP in the presence of a proton gradient across the membrane. The alpha chain is a regulatory subunit. The sequence is that of ATP synthase subunit alpha from Microcystis aeruginosa (strain NIES-843 / IAM M-2473).